Here is a 368-residue protein sequence, read N- to C-terminus: p21-activated protein kinase-interacting protein 1-like (368 aa).

5 WD repeats span residues 45-82 (AHTA…EHGA), 85-123 (HHDG…CLKT), 126-165 (AHKG…SAFI), 207-245 (AFTK…CVCE), and 248-289 (AHEN…IESP).

The protein resides in the nucleus. The protein localises to the nucleolus. Its function is as follows. Negatively regulates the PAK1 kinase. PAK1 is a member of the PAK kinase family, which has been shown to play a positive role in the regulation of signaling pathways involving MAPK8 and RELA. PAK1 exists as an inactive homodimer, which is activated by binding of small GTPases such as CDC42 to an N-terminal regulatory domain. PAK1IP1 also binds to the N-terminus of PAK1, and inhibits the specific activation of PAK1 by CDC42. May be involved in ribosomal large subunit assembly. The polypeptide is p21-activated protein kinase-interacting protein 1-like (pak1ip1) (Danio rerio (Zebrafish)).